Here is a 463-residue protein sequence, read N- to C-terminus: MDFGVLPPEINSGRMYAGPGSGPMLAAAAAWDGLATELQSTAADYGSVISVLTGVWSGQSSGTMAAAAAPYVAWMSATAALAREAAAQASAAAAAYEAAFAATVPPPVVAANRAELAVLAATNIFGQNTGAIAAAEARYAEMWAQDAAAMYGYAGSSSVATQVTPFAAPPPTTNAAGLATQGVAVAQAVGASAGNARSLVSEVLEFLATAGTNYNKTVASLMNAVTGVPYASSVYNSMLGLGFAESKMVLPANDTVISTIFGMVQFQKFFNPVTPFNPDLIPKSALGAGLGLRSAISSGLGSTAPAISAGASQAGSVGGMSVPPSWAAATPAIRTVAAVFSSTGLQAVPAAAISEGSLLSQMALASVAGGALGGAAARATGGFLGGGRVTAVKKSLKDSDLPDKLRRVVAHMMEKPESVQHWHTDEDGLDDLLAELKKKPGIHAVHMAGGNKAEIAPTISESG.

It belongs to the mycobacterial PPE family.

This is an uncharacterized protein from Mycobacterium tuberculosis (strain CDC 1551 / Oshkosh).